The primary structure comprises 130 residues: MIGNWNYGTGRRKTSVARVFIKKGSGKIVVNGKPVDEFFARETGRMIVCQPLELTGHLESFDIKVNVHGGGETGQAGAVRHGITRALIDYDAALKPALSQAGFVTRDAREVERKKVGFRKARRRKQFSKR.

Belongs to the universal ribosomal protein uS9 family.

The chain is Small ribosomal subunit protein uS9 from Bordetella parapertussis (strain 12822 / ATCC BAA-587 / NCTC 13253).